The primary structure comprises 481 residues: Xylulose kinase (481 aa).

81-82 lines the substrate pocket; the sequence is QH. Residue Asp-239 is the Proton acceptor of the active site.

It belongs to the FGGY kinase family.

The enzyme catalyses D-xylulose + ATP = D-xylulose 5-phosphate + ADP + H(+). Functionally, catalyzes the phosphorylation of D-xylulose to D-xylulose 5-phosphate. In Streptomyces rubiginosus, this protein is Xylulose kinase.